A 256-amino-acid chain; its full sequence is Transcription factor bHLH131 (256 aa).

The bHLH domain maps to 91–140; the sequence is VAAKKHSDAERRRRLRINSQFATLRTILPNLVKQDKASVLGETVRYFNEL.

As to quaternary structure, homodimer.

The protein localises to the nucleus. The polypeptide is Transcription factor bHLH131 (BHLH131) (Arabidopsis thaliana (Mouse-ear cress)).